The sequence spans 130 residues: Small ribosomal subunit protein uS9 (130 aa).

The protein belongs to the universal ribosomal protein uS9 family.

The sequence is that of Small ribosomal subunit protein uS9 from Oceanobacillus iheyensis (strain DSM 14371 / CIP 107618 / JCM 11309 / KCTC 3954 / HTE831).